Here is a 491-residue protein sequence, read N- to C-terminus: Glycogen synthase (491 aa).

An ADP-alpha-D-glucose-binding site is contributed by Arg-20.

This sequence belongs to the glycosyltransferase 1 family. Bacterial/plant glycogen synthase subfamily.

It catalyses the reaction [(1-&gt;4)-alpha-D-glucosyl](n) + ADP-alpha-D-glucose = [(1-&gt;4)-alpha-D-glucosyl](n+1) + ADP + H(+). The protein operates within glycan biosynthesis; glycogen biosynthesis. Synthesizes alpha-1,4-glucan chains using ADP-glucose. The chain is Glycogen synthase from Prosthecochloris aestuarii (strain DSM 271 / SK 413).